Reading from the N-terminus, the 393-residue chain is Outer membrane protein assembly factor BamB (393 aa).

A signal peptide spans 1–19 (MQLRKTLLVGLVSVALLSG). The N-palmitoyl cysteine moiety is linked to residue Cys20. Cys20 carries the S-diacylglycerol cysteine lipid modification.

It belongs to the BamB family. In terms of assembly, part of the Bam complex, which is composed of the outer membrane protein BamA, and four lipoproteins BamB, BamC, BamD and BamE.

It localises to the cell outer membrane. Part of the outer membrane protein assembly complex, which is involved in assembly and insertion of beta-barrel proteins into the outer membrane. In Yersinia pestis, this protein is Outer membrane protein assembly factor BamB.